The primary structure comprises 923 residues: Mitochondrial 10-formyltetrahydrofolate dehydrogenase (923 aa).

Residues 1–19 constitute a mitochondrion; not cleaved transit peptide; it reads MLRRGSQALRRFSTGRVYF. The interval 23–331 is hydrolase domain; the sequence is LKLALIGQSL…PASQYFSTGE (309 aa). Ser31 carries the post-translational modification Phosphoserine. Lys60 bears the N6-succinyllysine mark. A (6R)-10-formyltetrahydrofolate-binding site is contributed by 110 to 112; sequence QFI. The Proton donor role is filled by His128. Asp164 is a binding site for (6R)-10-formyltetrahydrofolate. A Carrier domain is found at 339–416; it reads AEEVKVAETI…GFIQKVVRKL (78 aa). Ser375 carries the O-(pantetheine 4'-phosphoryl)serine modification. The segment at 438–923 is aldehyde dehydrogenase domain; it reads MVKMPYQCFI…LKTKTVTLEY (486 aa). NADP(+) contacts are provided by residues 592–594 and 618–621; these read IPW and KPAQ. The residue at position 650 (Ser650) is a Phosphoserine. NADP(+) is bound by residues 651 to 656 and 671 to 672; these read GGIAGQ and GS. An N6-succinyllysine modification is found at Lys681. Residue Glu694 is the Proton acceptor of the active site. NADP(+) is bound at residue 694-695; it reads EL. Residue Cys728 is the Proton donor of the active site. Residue Lys778 coordinates NADP(+). N6-succinyllysine is present on Lys788. 825–827 is an NADP(+) binding site; that stretch reads ESF. Lys903 is modified (N6-acetyllysine).

This sequence in the N-terminal section; belongs to the GART family. It in the C-terminal section; belongs to the aldehyde dehydrogenase family. ALDH1L subfamily. Phosphopantetheinylation at Ser-375 by AASDHPPT is required for the formyltetrahydrofolate dehydrogenase activity. In terms of tissue distribution, highly expressed in pancreas, heart, brain and skeletal muscle.

The protein resides in the mitochondrion. The catalysed reaction is (6R)-10-formyltetrahydrofolate + NADP(+) + H2O = (6S)-5,6,7,8-tetrahydrofolate + CO2 + NADPH + H(+). Mitochondrial 10-formyltetrahydrofolate dehydrogenase that catalyzes the NADP(+)-dependent conversion of 10-formyltetrahydrofolate to tetrahydrofolate and carbon dioxide. This Homo sapiens (Human) protein is Mitochondrial 10-formyltetrahydrofolate dehydrogenase.